The primary structure comprises 187 residues: UPF0301 protein YPTS_3341 (187 aa).

It belongs to the UPF0301 (AlgH) family.

The sequence is that of UPF0301 protein YPTS_3341 from Yersinia pseudotuberculosis serotype IB (strain PB1/+).